The sequence spans 410 residues: Platelet-activating factor acetylhydrolase IB subunit beta (410 aa).

Positions M1 to D38 are required for self-association and interaction with PAFAH1B2 and PAFAH1B3. The tract at residues M1–M66 is interaction with NDE1. The interaction with NDEL1 stretch occupies residues M1–Y102. The region spanning Q7–M39 is the LisH domain. Position 53 is an N6-acetyllysine (K53). A coiled-coil region spans residues T56–G82. An interaction with dynein and dynactin region spans residues G83–R410. WD repeat units lie at residues G106–K147, G148–T187, G190–T229, G232–E271, E274–T333, G336–N377, and A378–R410. S109 carries the post-translational modification Phosphoserine. The interval Y367–C409 is interaction with DCX. Residues F388–R410 form an interaction with NDEL1 region.

Belongs to the WD repeat LIS1/nudF family. Can self-associate. Component of the cytosolic PAF-AH (I) heterotetrameric enzyme, which is composed of PAFAH1B1 (beta), PAFAH1B2 (alpha2) and PAFAH1B3 (alpha1) subunits. The catalytic activity of the enzyme resides in the alpha1 (PAFAH1B3) and alpha2 (PAFAH1B2) subunits, whereas the beta subunit (PAFAH1B1) has regulatory activity. Trimer formation is not essential for the catalytic activity. Interacts with the catalytic dimer of PAF-AH (I) heterotetrameric enzyme: interacts with PAFAH1B2 homodimer (alpha2/alpha2 homodimer), PAFAH1B3 homodimer (alpha1/alpha1 homodimer) and PAFAH1B2-PAFAH1B3 heterodimer (alpha2/alpha1 heterodimer). Interacts with DCX, dynein, dynactin, IQGAP1, KATNB1, NDE1, NDEL1, NUDC and RSN. Interacts with DISC1, and this interaction is enhanced by NDEL1. Interacts with DAB1 when DAB1 is phosphorylated in response to RELN/reelin signaling. Interacts with INTS13. Interacts with DCDC1.

It localises to the cytoplasm. The protein localises to the cytoskeleton. Its subcellular location is the microtubule organizing center. The protein resides in the centrosome. It is found in the spindle. It localises to the nucleus membrane. Its function is as follows. Regulatory subunit (beta subunit) of the cytosolic type I platelet-activating factor (PAF) acetylhydrolase (PAF-AH (I)), an enzyme that catalyzes the hydrolyze of the acetyl group at the sn-2 position of PAF and its analogs and participates in PAF inactivation. Regulates the PAF-AH (I) activity in a catalytic dimer composition-dependent manner. Positively regulates the activity of the minus-end directed microtubule motor protein dynein. May enhance dynein-mediated microtubule sliding by targeting dynein to the microtubule plus end. Required for several dynein- and microtubule-dependent processes such as the maintenance of Golgi integrity, the peripheral transport of microtubule fragments and the coupling of the nucleus and centrosome. Required during brain development for the proliferation of neuronal precursors and the migration of newly formed neurons from the ventricular/subventricular zone toward the cortical plate. Neuronal migration involves a process called nucleokinesis, whereby migrating cells extend an anterior process into which the nucleus subsequently translocates. During nucleokinesis dynein at the nuclear surface may translocate the nucleus towards the centrosome by exerting force on centrosomal microtubules. Also required for proper activation of Rho GTPases and actin polymerization at the leading edge of locomoting cerebellar neurons and postmigratory hippocampal neurons in response to calcium influx triggered via NMDA receptors. May also play a role in other forms of cell locomotion including the migration of fibroblasts during wound healing. Required for dynein recruitment to microtubule plus ends and BICD2-bound cargos. May modulate the Reelin pathway through interaction of the PAF-AH (I) catalytic dimer with VLDLR. The polypeptide is Platelet-activating factor acetylhydrolase IB subunit beta (Felis catus (Cat)).